We begin with the raw amino-acid sequence, 123 residues long: Late histone H2B.L1 (123 aa).

Over residues 1-10 (MPAKAQPAGK) the composition is skewed to low complexity. Positions 1-33 (MPAKAQPAGKKGSKKAKAPRPSGGKKRRRRRKE) are disordered. Residues 11 to 32 (KGSKKAKAPRPSGGKKRRRRRK) show a composition bias toward basic residues. S110 carries an O-linked (GlcNAc) serine glycan. A Glycyl lysine isopeptide (Lys-Gly) (interchain with G-Cter in ubiquitin) cross-link involves residue K118.

It belongs to the histone H2B family. In terms of assembly, the nucleosome is a histone octamer containing two molecules each of H2A, H2B, H3 and H4 assembled in one H3-H4 heterotetramer and two H2A-H2B heterodimers. The octamer wraps approximately 147 bp of DNA. In terms of processing, monoubiquitination of Lys-118 gives a specific tag for epigenetic transcriptional activation and is also prerequisite for histone H3 'Lys-4' and 'Lys-79' methylation. GlcNAcylation at Ser-110 promotes monoubiquitination of Lys-118. It fluctuates in response to extracellular glucose, and associates with transcribed genes.

It is found in the nucleus. It localises to the chromosome. In terms of biological role, core component of nucleosome. Nucleosomes wrap and compact DNA into chromatin, limiting DNA accessibility to the cellular machineries which require DNA as a template. Histones thereby play a central role in transcription regulation, DNA repair, DNA replication and chromosomal stability. DNA accessibility is regulated via a complex set of post-translational modifications of histones, also called histone code, and nucleosome remodeling. This is Late histone H2B.L1 from Strongylocentrotus purpuratus (Purple sea urchin).